A 255-amino-acid polypeptide reads, in one-letter code: Triosephosphate isomerase (255 aa).

Position 9 to 11 (9 to 11 (NWK)) interacts with substrate. Residue histidine 95 is the Electrophile of the active site. Catalysis depends on glutamate 167, which acts as the Proton acceptor. Residues glycine 173, serine 212, and 233–234 (GG) contribute to the substrate site.

It belongs to the triosephosphate isomerase family. As to quaternary structure, homodimer.

The protein localises to the cytoplasm. It carries out the reaction D-glyceraldehyde 3-phosphate = dihydroxyacetone phosphate. The protein operates within carbohydrate biosynthesis; gluconeogenesis. It participates in carbohydrate degradation; glycolysis; D-glyceraldehyde 3-phosphate from glycerone phosphate: step 1/1. In terms of biological role, involved in the gluconeogenesis. Catalyzes stereospecifically the conversion of dihydroxyacetone phosphate (DHAP) to D-glyceraldehyde-3-phosphate (G3P). This is Triosephosphate isomerase from Yersinia pseudotuberculosis serotype O:1b (strain IP 31758).